A 128-amino-acid polypeptide reads, in one-letter code: uncharacterized protein (128 aa).

The interval 1-50 (MSNEQGKGMGFFGNKGKPASEKKDEKKTKLDLDYKPDLNPSTPYDPTLPV) is disordered. Positions 18–36 (PASEKKDEKKTKLDLDYKP) are enriched in basic and acidic residues.

This is an uncharacterized protein from Bacillus anthracis.